The primary structure comprises 146 residues: Hemoglobin subunit beta-2 (146 aa).

In terms of domain architecture, Globin spans 2–146 (GLTAHEKQLI…IADALGKGYH (145 aa)). Residues histidine 63 and histidine 92 each coordinate heme b.

Belongs to the globin family. Heterotetramer of two alpha chains and two beta chains. Red blood cells.

In terms of biological role, involved in oxygen transport from the lung to the various peripheral tissues. The chain is Hemoglobin subunit beta-2 (hbb2) from Xenopus borealis (Kenyan clawed frog).